The sequence spans 516 residues: Endo-acting ulvan lyase (516 aa).

Positions 1 to 24 are cleaved as a signal peptide; that stretch reads MLEKTTLKNIILIHFLMFLAVVTA. A disulfide bridge connects residues C38 and C65. The Ca(2+) site is built by G42, N44, D62, S64, A67, and N68. Residue Y138 participates in substrate binding. Residue K143 is the Proton acceptor of the active site. Substrate-binding positions include 191–195 and 260–263; these read EGDGR and YRVK. Catalysis depends on Y260, which acts as the Proton donor/acceptor. Residues 289-429 form a ulvan-binding domain region; the sequence is PIGDVYKLKN…VWKAIAVESL (141 aa). Positions 430-516 are cleaved as a propeptide — removed by the type IX secretion system (T9SS); it reads SVDENAILAS…NKYHKKLIVK (87 aa).

The protein belongs to the polysaccharide lyase 28 family. Ca(2+) serves as cofactor.

It is found in the secreted. Ulvan lyase involved in ulvan degradation. Ulvan is the main polysaccharide component of the Ulvales (green seaweed) cell wall. It is composed of disaccharide building blocks comprising 3-sulfated rhamnose (Rha3S) linked to D-glucuronic acid (GlcA), L-iduronic acid (IduA), or D-xylose (Xyl). Ulvan lyase catalyzes the endolytic cleavage of the glycosidic bond between Rha3S and the uronic acids GlcA or IduA, producing oligosaccharides that have unsaturated 4-deoxy-L-threo-hex-4-enopyranosiduronic acid (deltaUA) at the non-reducing end. This results eventually in the degradation of the ulvan polysaccharide into deltaUA-Rha3S disaccharides and deltaUA-Rha3S-Xyl-Rha3S tetrasaccharides. This chain is Endo-acting ulvan lyase, found in Formosa agariphila (strain DSM 15362 / KCTC 12365 / LMG 23005 / KMM 3901 / M-2Alg 35-1).